The primary structure comprises 146 residues: Ribosome-binding factor A (146 aa).

Positions 125–146 (RDLDADDDKTKDDRAKDDKDSE) are disordered.

Belongs to the RbfA family. As to quaternary structure, monomer. Binds 30S ribosomal subunits, but not 50S ribosomal subunits or 70S ribosomes.

The protein resides in the cytoplasm. Its function is as follows. One of several proteins that assist in the late maturation steps of the functional core of the 30S ribosomal subunit. Associates with free 30S ribosomal subunits (but not with 30S subunits that are part of 70S ribosomes or polysomes). Required for efficient processing of 16S rRNA. May interact with the 5'-terminal helix region of 16S rRNA. The protein is Ribosome-binding factor A of Mesorhizobium japonicum (strain LMG 29417 / CECT 9101 / MAFF 303099) (Mesorhizobium loti (strain MAFF 303099)).